Here is a 295-residue protein sequence, read N- to C-terminus: ATP synthase gamma chain (295 aa).

It belongs to the ATPase gamma chain family. F-type ATPases have 2 components, CF(1) - the catalytic core - and CF(0) - the membrane proton channel. CF(1) has five subunits: alpha(3), beta(3), gamma(1), delta(1), epsilon(1). CF(0) has three main subunits: a, b and c.

The protein localises to the cell inner membrane. Produces ATP from ADP in the presence of a proton gradient across the membrane. The gamma chain is believed to be important in regulating ATPase activity and the flow of protons through the CF(0) complex. This chain is ATP synthase gamma chain, found in Maricaulis maris (strain MCS10) (Caulobacter maris).